Reading from the N-terminus, the 59-residue chain is Large ribosomal subunit protein uL30 (59 aa).

Belongs to the universal ribosomal protein uL30 family. In terms of assembly, part of the 50S ribosomal subunit.

The sequence is that of Large ribosomal subunit protein uL30 from Histophilus somni (strain 129Pt) (Haemophilus somnus).